We begin with the raw amino-acid sequence, 228 residues long: Vesicle transport protein SEC20 (228 aa).

Over 1–199 (MAAPQDVHVR…LITKYNRREL (199 aa)) the chain is Cytoplasmic. Residues 37–90 (LSELTELNTKVKEKFQQLKQRIQELEQSAREQDKESEKQLLLQEVENHKKQMLS) adopt a coiled-coil conformation. A helical; Anchor for type IV membrane protein transmembrane segment spans residues 200-220 (TDKLLIFLALALFLATVLYIV). Over 221-228 (KKRLFPFL) the chain is Lumenal.

The protein belongs to the SEC20 family. In terms of assembly, component of a SNARE complex consisting of STX18, USE1L, BNIP1/SEC20L and SEC22B. Interacts directly with STX18, RINT1/TIP20L and NAPA. Interacts with ZW10 through RINT1. Interacts with BCL2. Interacts with RNF186. Interacts with RNF185. Interacts with SQSTM1; increased by 'Lys-63'-linked polyubiquitination of BNIP1. Polyubiquitinated. 'Lys-63'-linked polyubiquitination by RNF185 increases the interaction with the autophagy receptor SQSTM1. Undergoes 'Lys-29'- and 'Lys-63'-linked polyubiquitination by RNF186 that may regulate BNIP1 localization to the mitochondrion.

The protein resides in the endoplasmic reticulum membrane. It localises to the mitochondrion membrane. As part of a SNARE complex may be involved in endoplasmic reticulum membranes fusion and be required for the maintenance of endoplasmic reticulum organization. Also plays a role in apoptosis. It is for instance required for endoplasmic reticulum stress-induced apoptosis. As a substrate of RNF185 interacting with SQSTM1, might also be involved in mitochondrial autophagy. This is Vesicle transport protein SEC20 from Mus musculus (Mouse).